The primary structure comprises 113 residues: UPF0482 protein YnfB (113 aa).

A signal peptide spans 1–28 (MNYTLSKRLCLTAMLTLAAVVYTTSAFA).

The protein belongs to the UPF0482 family.

This chain is UPF0482 protein YnfB, found in Salmonella arizonae (strain ATCC BAA-731 / CDC346-86 / RSK2980).